The following is a 576-amino-acid chain: Sulfite reductase [NADPH] hemoprotein beta-component (576 aa).

The [4Fe-4S] cluster site is built by C435, C441, C480, and C484. Residue C484 participates in siroheme binding.

This sequence belongs to the nitrite and sulfite reductase 4Fe-4S domain family. In terms of assembly, alpha(8)-beta(8). The alpha component is a flavoprotein, the beta component is a hemoprotein. Siroheme is required as a cofactor. The cofactor is [4Fe-4S] cluster.

It carries out the reaction hydrogen sulfide + 3 NADP(+) + 3 H2O = sulfite + 3 NADPH + 4 H(+). It participates in sulfur metabolism; hydrogen sulfide biosynthesis; hydrogen sulfide from sulfite (NADPH route): step 1/1. In terms of biological role, component of the sulfite reductase complex that catalyzes the 6-electron reduction of sulfite to sulfide. This is one of several activities required for the biosynthesis of L-cysteine from sulfate. The polypeptide is Sulfite reductase [NADPH] hemoprotein beta-component (Yersinia pseudotuberculosis serotype O:1b (strain IP 31758)).